The sequence spans 206 residues: Large ribosomal subunit protein uL4 (206 aa).

A compositionally biased stretch (polar residues) spans 42–54 (RRQQGTHQSQGRS). The segment at 42–93 (RRQQGTHQSQGRSDVSRTGAKMFKQKGTGRARHSSARAPQFRGGGKAHGPVV) is disordered. The segment covering 64–76 (FKQKGTGRARHSS) has biased composition (basic residues).

This sequence belongs to the universal ribosomal protein uL4 family. As to quaternary structure, part of the 50S ribosomal subunit.

Functionally, one of the primary rRNA binding proteins, this protein initially binds near the 5'-end of the 23S rRNA. It is important during the early stages of 50S assembly. It makes multiple contacts with different domains of the 23S rRNA in the assembled 50S subunit and ribosome. In terms of biological role, forms part of the polypeptide exit tunnel. This is Large ribosomal subunit protein uL4 from Bartonella henselae (strain ATCC 49882 / DSM 28221 / CCUG 30454 / Houston 1) (Rochalimaea henselae).